We begin with the raw amino-acid sequence, 918 residues long: uncharacterized protein (918 aa).

Disordered regions lie at residues 66–150 (AMVH…SSYG), 226–283 (GADG…NADF), 326–481 (ADGT…EFGN), 515–548 (ALEKNHEKNSDGTFKDESKGSNSRVNRTDGGSNL), 594–707 (EITH…NAVK), 737–774 (NHSNDSDASSDSKIHSKSVDGTELTDAKHSNVSTSHLT), and 800–918 (HITH…IIQM). A compositionally biased stretch (low complexity) spans 79–89 (QSSGSSSNTHS). Basic and acidic residues predominate over residues 103 to 127 (NSEKKDGYNKESKVDEANENTKIKS). A compositionally biased stretch (low complexity) spans 270–281 (SKKAASASGSNA). 3 stretches are compositionally biased toward polar residues: residues 326–354 (ADGTSSMEASHAGSNSSKINSASGQSSDL), 363–372 (KSHSTSNKTD), and 379–404 (ANQSAGSISEQIGKNGQRSLNESSIE). A compositionally biased stretch (low complexity) spans 430 to 441 (SSSHSKSASGTS). Basic and acidic residues predominate over residues 515-533 (ALEKNHEKNSDGTFKDESK). Composition is skewed to polar residues over residues 534–545 (GSNSRVNRTDGG) and 604–619 (VAASANAKSSLDTSMS). Low complexity predominate over residues 632 to 647 (SSQAADSHDAISASSD). Over residues 648 to 660 (VDAKIVKHADRSE) the composition is skewed to basic and acidic residues. The segment covering 661–672 (SISNDSSNQTAS) has biased composition (polar residues). Over residues 673 to 688 (EHNDSSKQSEHEKRQN) the composition is skewed to basic and acidic residues. The segment covering 689-702 (ADGSFSDVSSNSAK) has biased composition (polar residues). 4 stretches are compositionally biased toward basic and acidic residues: residues 738–765 (HSNDSDASSDSKIHSKSVDGTELTDAKH), 800–814 (HITHEKSRADVDAGH), 830–846 (EGFKHHSDLESRGEGAQ), and 883–918 (LAKDGKGHFTETKDGSESHHKIDDKDVKQHKDIIQM).

This is an uncharacterized protein from Caenorhabditis elegans.